The following is an 80-amino-acid chain: Cytochrome c oxidase subunit 7B, mitochondrial (80 aa).

The transit peptide at 1–24 directs the protein to the mitochondrion; it reads MFPLVKSALNRLQVRSIQQTMARQ. Residues 25–32 lie on the Mitochondrial matrix side of the membrane; the sequence is SHQKRTPD. Residues 33-59 form a helical membrane-spanning segment; sequence FHDKYGNAVLASGATFCIVTWTYVATQ. The Mitochondrial intermembrane portion of the chain corresponds to 60–80; that stretch reads VGIEWNLSPVGRVTPKEWRNQ.

It belongs to the cytochrome c oxidase VIIb family. In terms of assembly, component of the cytochrome c oxidase (complex IV, CIV), a multisubunit enzyme composed of 14 subunits. The complex is composed of a catalytic core of 3 subunits MT-CO1, MT-CO2 and MT-CO3, encoded in the mitochondrial DNA, and 11 supernumerary subunits COX4I1 (or COX4I2), COX5A, COX5B, COX6A1 (or COX6A2), COX6B1 (or COX6B2), COX6C, COX7A2 (or COX7A1), COX7B, COX7C, COX8A and NDUFA4, which are encoded in the nuclear genome. The complex exists as a monomer or a dimer and forms supercomplexes (SCs) in the inner mitochondrial membrane with NADH-ubiquinone oxidoreductase (complex I, CI) and ubiquinol-cytochrome c oxidoreductase (cytochrome b-c1 complex, complex III, CIII), resulting in different assemblies (supercomplex SCI(1)III(2)IV(1) and megacomplex MCI(2)III(2)IV(2)).

The protein resides in the mitochondrion inner membrane. The protein operates within energy metabolism; oxidative phosphorylation. Functionally, component of the cytochrome c oxidase, the last enzyme in the mitochondrial electron transport chain which drives oxidative phosphorylation. The respiratory chain contains 3 multisubunit complexes succinate dehydrogenase (complex II, CII), ubiquinol-cytochrome c oxidoreductase (cytochrome b-c1 complex, complex III, CIII) and cytochrome c oxidase (complex IV, CIV), that cooperate to transfer electrons derived from NADH and succinate to molecular oxygen, creating an electrochemical gradient over the inner membrane that drives transmembrane transport and the ATP synthase. Cytochrome c oxidase is the component of the respiratory chain that catalyzes the reduction of oxygen to water. Electrons originating from reduced cytochrome c in the intermembrane space (IMS) are transferred via the dinuclear copper A center (CU(A)) of subunit 2 and heme A of subunit 1 to the active site in subunit 1, a binuclear center (BNC) formed by heme A3 and copper B (CU(B)). The BNC reduces molecular oxygen to 2 water molecules using 4 electrons from cytochrome c in the IMS and 4 protons from the mitochondrial matrix. Plays a role in proper central nervous system (CNS) development in vertebrates. The chain is Cytochrome c oxidase subunit 7B, mitochondrial (COX7B) from Homo sapiens (Human).